A 638-amino-acid polypeptide reads, in one-letter code: Mediator of RNA polymerase II transcription subunit 17 (638 aa).

The disordered stretch occupies residues 1 to 21 (MSDSFNLPLRPLTEKRERPDP).

The protein belongs to the Mediator complex subunit 17 family. Component of the Mediator complex.

The protein localises to the nucleus. Component of the Mediator complex, a coactivator involved in the regulated transcription of nearly all RNA polymerase II-dependent genes. Mediator functions as a bridge to convey information from gene-specific regulatory proteins to the basal RNA polymerase II transcription machinery. Mediator is recruited to promoters by direct interactions with regulatory proteins and serves as a scaffold for the assembly of a functional preinitiation complex with RNA polymerase II and the general transcription factors. The chain is Mediator of RNA polymerase II transcription subunit 17 (srb4) from Aspergillus oryzae (strain ATCC 42149 / RIB 40) (Yellow koji mold).